Consider the following 258-residue polypeptide: MARPPVPGSVVVPNWHESAEGKEYLACILRKNRRRVFGLLERPVLLPPVSIDTASYKIFVSGKSGVGKTALVAKLAGLEVPVVHHETTGIQTTVVFWPAKLQASSRVVMFRFEFWDCGESALKKFDHMLLACMENTDAFLFLFSFTDRASFEDLPGQLARIAGEAPGVVRMVIGSKFDQYMHTDVPERDLTAFRQAWELPLLRVKSVPGRRLADGRTLDGRAGLADVAHILNGLAEQLWHQDQVAAGLLPNPPESAPE.

A small GTPase-like region spans residues 50–258 (SIDTASYKIF…LPNPPESAPE (209 aa)). The GTP site is built by S64, G65, G67, K68, T69, A70, V82, H84, T87, K176, D178, and S206.

Belongs to the small GTPase superfamily. Rab family. Interacts with FUZ. Associates with the CPLANE (ciliogenesis and planar polarity effectors) complex via its interaction with FUZ.

The protein localises to the cytoplasm. Its subcellular location is the cytoskeleton. It localises to the cilium basal body. It is found in the microtubule organizing center. The protein resides in the centrosome. The protein localises to the centriole. Required for efficient primary cilia initiation, regulating a late step in cilia initiation. Plays a role in the final maturation of the mother centriole and ciliary vesicle that allows extension of the ciliary axoneme. The sequence is that of Ciliogenesis and planar polarity effector 2 from Homo sapiens (Human).